The following is a 365-amino-acid chain: F-box protein At1g48060 (365 aa).

Residues 1–20 form a disordered region; it reads MKPQEEEEKNENMARKRSKS. The region spanning 20-69 is the F-box domain; the sequence is SSSSLSIPLDIATDIFLRLPAKSVVRFSCVAKHWSSITTAPYFTNSFETR.

This is F-box protein At1g48060 from Arabidopsis thaliana (Mouse-ear cress).